Reading from the N-terminus, the 131-residue chain is uncharacterized protein (131 aa).

Residues 60 to 100 form a disordered region; it reads GRHTLSQVPNKGHEKASAVQLPEKQGTDQSRRGPTSAVTKA. Residues 91-100 show a composition bias toward polar residues; it reads RGPTSAVTKA.

This is an uncharacterized protein from Homo sapiens (Human).